Reading from the N-terminus, the 293-residue chain is Homoserine kinase (293 aa).

84-94 (PLSRGLGSSSA) is an ATP binding site.

Belongs to the GHMP kinase family. Homoserine kinase subfamily.

It localises to the cytoplasm. The enzyme catalyses L-homoserine + ATP = O-phospho-L-homoserine + ADP + H(+). The protein operates within amino-acid biosynthesis; L-threonine biosynthesis; L-threonine from L-aspartate: step 4/5. In terms of biological role, catalyzes the ATP-dependent phosphorylation of L-homoserine to L-homoserine phosphate. The chain is Homoserine kinase from Aliarcobacter butzleri (strain RM4018) (Arcobacter butzleri).